Here is a 1449-residue protein sequence, read N- to C-terminus: Disease resistance protein RPP5 (1449 aa).

One can recognise a TIR domain in the interval 10 to 178 (RRYDVFPSFS…KISNDVSNKL (169 aa)). Residue Glu85 is part of the active site. The region spanning 192 to 446 (EAHIEAIKSV…IACLFNGFEV (255 aa)) is the NB-ARC domain. LRR repeat units lie at residues 549 to 573 (MRNLQYLKIGDWSDGGQPQSLVYLP), 574 to 595 (LKLRLLDWDDCPLKSLPSTFKA), 597 to 618 (YLVNLIMKYSKLEKLWEGTLPL), 619 to 642 (GSLKKMNLLCSKNLKEIPDLSNAR), 644 to 665 (LEELDLEGCESLVTLPSSIQNA), 687 to 710 (MCNLEYLSVDCSRVEGTQGIVYFP), 712 to 732 (KLRLLLWNNCPLKRLHSNFKV), 733 to 755 (EYLVKLRMENSDLEKLWDGTQPL), 756 to 779 (GRLKQMFLRGSKYLKEIPDLSLAI), 802 to 825 (AIKLIYLDISDCKKLESFPTDLNL), 826 to 849 (ESLEYLNLTGCPNLRNFPAIKMGC), 915 to 939 (LGSLEEMDLSESENLTEIPDLSKAT), 941 to 962 (LKHLYLNNCKSLVTLPSTIGNL), 963 to 985 (QKLVRLEMKECTGLEVLPTDVNL), 986 to 1011 (SSLETLDLSGCSSLRTFPLISKSIKW), 1028 to 1052 (ATKLESLILNNCKSLVTLPSTIGNL), 1053 to 1077 (QNLRRLYMKRCTGLEVLPTDVNLSS), 1096 to 1119 (STNIVWLYLENTAIGEVPCCIEDF), and 1120 to 1143 (TRLRVLLMYCCQRLKNISPNIFRL).

In terms of assembly, interacts with RSH1.

The catalysed reaction is NAD(+) + H2O = ADP-D-ribose + nicotinamide + H(+). Its function is as follows. TIR-NB-LRR receptor-like protein that confers resistance to the pathogen Hyaloperonospora arabidopsis isolate Noco2 (downy mildew disease). Confers resistance to H.arabidopsis isolates Emoy2, Emwa1 and Noco2. This Arabidopsis thaliana (Mouse-ear cress) protein is Disease resistance protein RPP5.